Consider the following 340-residue polypeptide: Ketol-acid reductoisomerase (NADP(+)) (340 aa).

The KARI N-terminal Rossmann domain maps to 1 to 182 (MRVYYDRDCD…GGGRSGIIET (182 aa)). NADP(+) contacts are provided by residues 24-27 (YGSQ), arginine 48, serine 51, serine 53, and 83-86 (DELQ). Histidine 108 is a catalytic residue. Residue glycine 134 participates in NADP(+) binding. The 147-residue stretch at 183–329 (NFRQECETDL…EKLRGMMPWI (147 aa)) folds into the KARI C-terminal knotted domain. Aspartate 191, glutamate 195, glutamate 227, and glutamate 231 together coordinate Mg(2+). A substrate-binding site is contributed by serine 252.

Belongs to the ketol-acid reductoisomerase family. Mg(2+) is required as a cofactor.

It catalyses the reaction (2R)-2,3-dihydroxy-3-methylbutanoate + NADP(+) = (2S)-2-acetolactate + NADPH + H(+). It carries out the reaction (2R,3R)-2,3-dihydroxy-3-methylpentanoate + NADP(+) = (S)-2-ethyl-2-hydroxy-3-oxobutanoate + NADPH + H(+). It participates in amino-acid biosynthesis; L-isoleucine biosynthesis; L-isoleucine from 2-oxobutanoate: step 2/4. Its pathway is amino-acid biosynthesis; L-valine biosynthesis; L-valine from pyruvate: step 2/4. Involved in the biosynthesis of branched-chain amino acids (BCAA). Catalyzes an alkyl-migration followed by a ketol-acid reduction of (S)-2-acetolactate (S2AL) to yield (R)-2,3-dihydroxy-isovalerate. In the isomerase reaction, S2AL is rearranged via a Mg-dependent methyl migration to produce 3-hydroxy-3-methyl-2-ketobutyrate (HMKB). In the reductase reaction, this 2-ketoacid undergoes a metal-dependent reduction by NADPH to yield (R)-2,3-dihydroxy-isovalerate. This is Ketol-acid reductoisomerase (NADP(+)) from Cereibacter sphaeroides (strain ATCC 17023 / DSM 158 / JCM 6121 / CCUG 31486 / LMG 2827 / NBRC 12203 / NCIMB 8253 / ATH 2.4.1.) (Rhodobacter sphaeroides).